We begin with the raw amino-acid sequence, 62 residues long: Sec-independent protein translocase protein TatA (62 aa).

A helical membrane pass occupies residues 10 to 32; that stretch reads LLIILIIVIAIFGAGKLAGLGGA.

Belongs to the TatA/E family. In terms of assembly, forms a complex with TatC.

The protein resides in the cell membrane. Functionally, part of the twin-arginine translocation (Tat) system that transports large folded proteins containing a characteristic twin-arginine motif in their signal peptide across membranes. TatA could form the protein-conducting channel of the Tat system. This chain is Sec-independent protein translocase protein TatA, found in Chloroflexus aurantiacus (strain ATCC 29366 / DSM 635 / J-10-fl).